The sequence spans 320 residues: Aspartate carbamoyltransferase catalytic subunit (320 aa).

Carbamoyl phosphate is bound by residues arginine 68 and threonine 69. Residue lysine 96 participates in L-aspartate binding. Residues arginine 118, histidine 148, and glutamine 151 each coordinate carbamoyl phosphate. Positions 181 and 236 each coordinate L-aspartate. Carbamoyl phosphate-binding residues include glycine 277 and proline 278.

This sequence belongs to the aspartate/ornithine carbamoyltransferase superfamily. ATCase family. As to quaternary structure, heterododecamer (2C3:3R2) of six catalytic PyrB chains organized as two trimers (C3), and six regulatory PyrI chains organized as three dimers (R2).

The enzyme catalyses carbamoyl phosphate + L-aspartate = N-carbamoyl-L-aspartate + phosphate + H(+). It functions in the pathway pyrimidine metabolism; UMP biosynthesis via de novo pathway; (S)-dihydroorotate from bicarbonate: step 2/3. Catalyzes the condensation of carbamoyl phosphate and aspartate to form carbamoyl aspartate and inorganic phosphate, the committed step in the de novo pyrimidine nucleotide biosynthesis pathway. The chain is Aspartate carbamoyltransferase catalytic subunit from Methylibium petroleiphilum (strain ATCC BAA-1232 / LMG 22953 / PM1).